Consider the following 232-residue polypeptide: Nucleolar protein 16 (232 aa).

Residues 1 to 14 show a composition bias toward basic residues; it reads MGRELQKRKKRSSR. 2 disordered regions span residues 1-20 and 113-161; these read MGRE…VQTH and RSDN…QSSR. Positions 132–154 are enriched in basic and acidic residues; the sequence is EEPKPKNPTHDIEWHGISDDRQE.

It belongs to the NOP16 family. In terms of assembly, component of the pre-66S ribosomal particle.

It localises to the nucleus. It is found in the nucleolus. Functionally, involved in the biogenesis of the 60S ribosomal subunit. The sequence is that of Nucleolar protein 16 (nop-16) from Neurospora crassa (strain ATCC 24698 / 74-OR23-1A / CBS 708.71 / DSM 1257 / FGSC 987).